A 313-amino-acid chain; its full sequence is D-alanine--D-alanine ligase (313 aa).

The ATP-grasp domain maps to 107–303 (KQAFAAAGLT…FEALVEQIAC (197 aa)). 135–188 (PFGLPVVVKPVQEGSSVGVTIVKKPEDLQAALDEAFRYDTLVLVEKYIKGQEVQ) is a binding site for ATP. Mg(2+) is bound by residues D256, E269, and N271.

The protein belongs to the D-alanine--D-alanine ligase family. Mg(2+) is required as a cofactor. The cofactor is Mn(2+).

It localises to the cytoplasm. The enzyme catalyses 2 D-alanine + ATP = D-alanyl-D-alanine + ADP + phosphate + H(+). It functions in the pathway cell wall biogenesis; peptidoglycan biosynthesis. Functionally, cell wall formation. This chain is D-alanine--D-alanine ligase, found in Trichlorobacter lovleyi (strain ATCC BAA-1151 / DSM 17278 / SZ) (Geobacter lovleyi).